Here is a 475-residue protein sequence, read N- to C-terminus: RNA pseudouridine synthase 3, mitochondrial (475 aa).

A mitochondrion-targeting transit peptide spans 1 to 15; sequence MLCRRRRVGAAVRWL. Residues 40–74 form a disordered region; it reads RLGKPKPGPRPRQLLSLPPFPGGGDGDPLPGRKAA. One can recognise an S4 RNA-binding domain in the interval 90–160; it reads ADVPQEVVQA…GEIKKRYETI (71 aa). D230 is an active-site residue.

Belongs to the pseudouridine synthase RluA family.

It is found in the mitochondrion. The enzyme catalyses a uridine in RNA = a pseudouridine in RNA. The polypeptide is RNA pseudouridine synthase 3, mitochondrial (Oryza sativa subsp. japonica (Rice)).